The sequence spans 1222 residues: Chitin synthase 4 (1222 aa).

2 disordered regions span residues 1–101 (MSLP…ERNR) and 138–200 (TERT…KRIE). 2 stretches are compositionally biased toward polar residues: residues 11 to 24 (QAYN…NSPS) and 42 to 77 (NQAS…SPDG). Basic residues predominate over residues 182 to 196 (SGKIKRKSRRHSKPP). A run of 2 helical transmembrane segments spans residues 205–225 (PPTF…GFIM) and 243–263 (MGLI…TFGF). 3 N-linked (GlcNAc...) asparagine glycosylation sites follow: Asn378, Asn418, and Asn440. Residues 513-533 (ALILSVVGVRFFLAIIFQWFI) traverse the membrane as a helical segment. Positions 576 to 630 (TVYGSSDRSSKRASFLPTTSRFSSVGGPDIRSQGGRRMPTTMASQSTSNQLLTPN) are disordered. Residues 616 to 630 (TMASQSTSNQLLTPN) are compositionally biased toward polar residues. Residues Asn637 and Asn1030 are each glycosylated (N-linked (GlcNAc...) asparagine). The next 3 membrane-spanning stretches (helical) occupy residues 1055-1075 (FIIF…AFTF), 1089-1109 (IIPL…VIIT), and 1113-1133 (WSYI…NFVL). A disordered region spans residues 1202 to 1222 (GGQTWTSPPGHQYNEEYYSDA).

It belongs to the chitin synthase family. Class IV subfamily.

Its subcellular location is the cell membrane. The enzyme catalyses [(1-&gt;4)-N-acetyl-beta-D-glucosaminyl](n) + UDP-N-acetyl-alpha-D-glucosamine = [(1-&gt;4)-N-acetyl-beta-D-glucosaminyl](n+1) + UDP + H(+). Functionally, polymerizes chitin, a structural polymer of the cell wall and septum, by transferring the sugar moiety of UDP-GlcNAc to the non-reducing end of the growing chitin polymer. Shows additive effects in septum formation with CHS1, CHS2, CHS3A, CHS5, CHS6 and CHS7. Regulates conidiation. Involved in virulence and mediates mycotoxin deoxinivalenol (DON) biosynthesis via the regulation of the expression of TRI4, TRI5 and TRI6. The sequence is that of Chitin synthase 4 from Gibberella zeae (strain ATCC MYA-4620 / CBS 123657 / FGSC 9075 / NRRL 31084 / PH-1) (Wheat head blight fungus).